Consider the following 289-residue polypeptide: 4-diphosphocytidyl-2-C-methyl-D-erythritol kinase (289 aa).

Lysine 13 is a catalytic residue. Proline 101–serine 111 lines the ATP pocket. Residue aspartate 143 is part of the active site.

Belongs to the GHMP kinase family. IspE subfamily.

It catalyses the reaction 4-CDP-2-C-methyl-D-erythritol + ATP = 4-CDP-2-C-methyl-D-erythritol 2-phosphate + ADP + H(+). The protein operates within isoprenoid biosynthesis; isopentenyl diphosphate biosynthesis via DXP pathway; isopentenyl diphosphate from 1-deoxy-D-xylulose 5-phosphate: step 3/6. Its function is as follows. Catalyzes the phosphorylation of the position 2 hydroxy group of 4-diphosphocytidyl-2C-methyl-D-erythritol. The polypeptide is 4-diphosphocytidyl-2-C-methyl-D-erythritol kinase (Janthinobacterium sp. (strain Marseille) (Minibacterium massiliensis)).